A 110-amino-acid polypeptide reads, in one-letter code: MEVAAKLRGAGLSAQKARLVADQIRGKSVEEALDLLAFSTKKGAAVIKKVLESAIANAEHNEGADVDELKVSTIFVDEGLTMKRIRPRAKGRADRIFKRTCHITVKVADQ.

The protein belongs to the universal ribosomal protein uL22 family. In terms of assembly, part of the 50S ribosomal subunit.

In terms of biological role, this protein binds specifically to 23S rRNA; its binding is stimulated by other ribosomal proteins, e.g. L4, L17, and L20. It is important during the early stages of 50S assembly. It makes multiple contacts with different domains of the 23S rRNA in the assembled 50S subunit and ribosome. Its function is as follows. The globular domain of the protein is located near the polypeptide exit tunnel on the outside of the subunit, while an extended beta-hairpin is found that lines the wall of the exit tunnel in the center of the 70S ribosome. In Teredinibacter turnerae (strain ATCC 39867 / T7901), this protein is Large ribosomal subunit protein uL22.